The sequence spans 232 residues: Myb-related protein 308 (232 aa).

2 consecutive HTH myb-type domains span residues 9–61 (KAHT…INYL) and 62–116 (RPDL…RRKL). DNA-binding regions (H-T-H motif) lie at residues 37 to 61 (WRSLPKAAGLLRCGKSCRLRWINYL) and 89 to 112 (WSLIAGRLPGRTDNEIKNYWNTHI).

Expressed in roots, stems, leaves, seed pods and flowers.

It is found in the nucleus. In terms of biological role, transcription factor. The protein is Myb-related protein 308 of Antirrhinum majus (Garden snapdragon).